The primary structure comprises 337 residues: Anthranilate phosphoribosyltransferase (337 aa).

5-phospho-alpha-D-ribose 1-diphosphate contacts are provided by residues Gly80, 83–84 (GD), Thr88, 90–93 (NIST), 108–116 (KHGNRAVSS), and Ser120. Gly80 is an anthranilate binding site. Ser92 contacts Mg(2+). Asn111 provides a ligand contact to anthranilate. Arg166 is a binding site for anthranilate. Positions 224 and 225 each coordinate Mg(2+).

The protein belongs to the anthranilate phosphoribosyltransferase family. As to quaternary structure, homodimer. It depends on Mg(2+) as a cofactor.

The catalysed reaction is N-(5-phospho-beta-D-ribosyl)anthranilate + diphosphate = 5-phospho-alpha-D-ribose 1-diphosphate + anthranilate. Its pathway is amino-acid biosynthesis; L-tryptophan biosynthesis; L-tryptophan from chorismate: step 2/5. Catalyzes the transfer of the phosphoribosyl group of 5-phosphorylribose-1-pyrophosphate (PRPP) to anthranilate to yield N-(5'-phosphoribosyl)-anthranilate (PRA). This is Anthranilate phosphoribosyltransferase from Anaeromyxobacter dehalogenans (strain 2CP-1 / ATCC BAA-258).